A 300-amino-acid polypeptide reads, in one-letter code: GTPase Era (300 aa).

The 170-residue stretch at 4–173 (KYGIVAIVGK…INTIKQYLHK (170 aa)) folds into the Era-type G domain. The G1 stretch occupies residues 12-19 (GKPNVGKS). Position 12 to 19 (12 to 19 (GKPNVGKS)) interacts with GTP. Positions 38 to 42 (QTTRN) are G2. The segment at 59–62 (DTPG) is G3. Residues 59–63 (DTPGF) and 122–125 (SKAE) contribute to the GTP site. The interval 122 to 125 (SKAE) is G4. The interval 152–154 (ISA) is G5. Positions 204 to 282 (LNHEVPHGVG…SLTIFVKVEN (79 aa)) constitute a KH type-2 domain.

This sequence belongs to the TRAFAC class TrmE-Era-EngA-EngB-Septin-like GTPase superfamily. Era GTPase family. As to quaternary structure, monomer.

The protein localises to the cytoplasm. It is found in the cell membrane. An essential GTPase that binds both GDP and GTP, with rapid nucleotide exchange. Plays a role in 16S rRNA processing and 30S ribosomal subunit biogenesis and possibly also in cell cycle regulation and energy metabolism. The polypeptide is GTPase Era (Ureaplasma urealyticum serovar 10 (strain ATCC 33699 / Western)).